The chain runs to 104 residues: Class I hydrophobin 12 (104 aa).

Residues 1 to 25 (MFSKATLFFTAAVVIVAAGATPTTS) form the signal peptide. 4 cysteine pairs are disulfide-bonded: Cys-27–Cys-85, Cys-34–Cys-79, Cys-35–Cys-67, and Cys-86–Cys-99.

The protein belongs to the fungal hydrophobin family. As to quaternary structure, self-assembles to form functional amyloid fibrils called rodlets. Self-assembly into fibrillar rodlets occurs spontaneously at hydrophobic:hydrophilic interfaces and the rodlets further associate laterally to form amphipathic monolayers.

The protein localises to the secreted. Its subcellular location is the cell wall. In terms of biological role, aerial growth, conidiation, and dispersal of filamentous fungi in the environment rely upon a capability of their secreting small amphipathic proteins called hydrophobins (HPBs) with low sequence identity. Class I can self-assemble into an outermost layer of rodlet bundles on aerial cell surfaces, conferring cellular hydrophobicity that supports fungal growth, development and dispersal; whereas Class II form highly ordered films at water-air interfaces through intermolecular interactions but contribute nothing to the rodlet structure. Hydph12 is a class I hydrophobin involved in the formation of mycelium knots. The sequence is that of Class I hydrophobin 12 from Pleurotus ostreatus (strain PC15) (Oyster mushroom).